The sequence spans 398 residues: Phosphopentomutase (398 aa).

Asp13, Asp290, His295, Asp331, His332, and His343 together coordinate Mn(2+).

This sequence belongs to the phosphopentomutase family. The cofactor is Mn(2+).

It localises to the cytoplasm. It carries out the reaction 2-deoxy-alpha-D-ribose 1-phosphate = 2-deoxy-D-ribose 5-phosphate. The enzyme catalyses alpha-D-ribose 1-phosphate = D-ribose 5-phosphate. Its pathway is carbohydrate degradation; 2-deoxy-D-ribose 1-phosphate degradation; D-glyceraldehyde 3-phosphate and acetaldehyde from 2-deoxy-alpha-D-ribose 1-phosphate: step 1/2. Isomerase that catalyzes the conversion of deoxy-ribose 1-phosphate (dRib-1-P) and ribose 1-phosphate (Rib-1-P) to deoxy-ribose 5-phosphate (dRib-5-P) and ribose 5-phosphate (Rib-5-P), respectively. The sequence is that of Phosphopentomutase from Clostridium tetani (strain Massachusetts / E88).